The chain runs to 583 residues: Complement factor I (583 aa).

The signal sequence occupies residues Met-1–Cys-18. 17 disulfide bridges follow: Cys-33/Cys-255, Cys-43/Cys-54, Cys-48/Cys-59, Cys-61/Cys-93, Cys-67/Cys-86, Cys-75/Cys-106, Cys-141/Cys-181, Cys-154/Cys-214, Cys-186/Cys-196, Cys-229/Cys-247, Cys-241/Cys-256, Cys-259/Cys-271, Cys-266/Cys-284, Cys-278/Cys-293, Cys-327/Cys-453, Cys-365/Cys-381, and Cys-373/Cys-444. In terms of domain architecture, Kazal-like spans Ile-55–Ala-108. Asn-70 is a glycosylation site (N-linked (GlcNAc...) asparagine). Asn-103 carries N-linked (GlcNAc...) (complex) asparagine glycosylation. The SRCR domain occupies Val-114–Val-212. Residue Asn-177 is glycosylated (N-linked (GlcNAc...) asparagine). LDL-receptor class A domains follow at residues Val-213–Lys-257 and Ala-258–Ala-294. The Ca(2+) site is built by Lys-239, Asp-242, Ile-244, Asp-246, Asp-252, and Glu-253. Tyr-276, Asn-279, Glu-281, Asp-283, Asp-289, and Glu-290 together coordinate Ca(2+). In terms of domain architecture, Peptidase S1 spans Ile-340 to Gly-574. Catalysis depends on charge relay system residues His-380 and Asp-429. 2 N-linked (GlcNAc...) asparagine glycosylation sites follow: Asn-464 and Asn-494. 3 disulfide bridges follow: Cys-467/Cys-531, Cys-495/Cys-510, and Cys-521/Cys-550. Ser-525 acts as the Charge relay system in catalysis. Residue Asn-536 is glycosylated (N-linked (GlcNAc...) asparagine).

Belongs to the peptidase S1 family. As to quaternary structure, heterodimer of a light and heavy chains; disulfide-linked. The fully processed and mature protein circulates as a zymogen, and is allosterically activated by substrate-induced remodeling of the active site. Interacts with C3b. Interacts with complement factor H. (Microbial infection) Interacts with Staphylococcus aureus clumping factor A/ClfA; this interaction enhances cleavage of C3b into iC3b by CFI. As to expression, expressed in the liver by hepatocytes. Also present in other cells such as monocytes, fibroblasts or keratinocytes.

It localises to the secreted. The protein resides in the extracellular space. It catalyses the reaction Inactivates complement subcomponents C3b, iC3b and C4b by proteolytic cleavage.. Functionally, trypsin-like serine protease that plays an essential role in regulating the immune response by controlling all complement pathways. Inhibits these pathways by cleaving three peptide bonds in the alpha-chain of C3b and two bonds in the alpha-chain of C4b thereby inactivating these proteins. Essential cofactors for these reactions include factor H and C4BP in the fluid phase and membrane cofactor protein/CD46 and CR1 on cell surfaces. The presence of these cofactors on healthy cells allows degradation of deposited C3b by CFI in order to prevent undesired complement activation, while in apoptotic cells or microbes, the absence of such cofactors leads to C3b-mediated complement activation and subsequent opsonization. This Homo sapiens (Human) protein is Complement factor I (CFI).